A 244-amino-acid chain; its full sequence is Phosphonates import ATP-binding protein PhnC 2 (244 aa).

In terms of domain architecture, ABC transporter spans 3–242 (LRVEGLKKVY…ELTDYTVDQL (240 aa)). 36-43 (GPSGAGKS) is an ATP binding site.

Belongs to the ABC transporter superfamily. Phosphonates importer (TC 3.A.1.9.1) family. In terms of assembly, the complex is composed of two ATP-binding proteins (PhnC), two transmembrane proteins (PhnE) and a solute-binding protein (PhnD).

Its subcellular location is the cell membrane. It carries out the reaction phosphonate(out) + ATP + H2O = phosphonate(in) + ADP + phosphate + H(+). Functionally, part of the ABC transporter complex PhnCDE involved in phosphonates import. Responsible for energy coupling to the transport system. The sequence is that of Phosphonates import ATP-binding protein PhnC 2 from Halalkalibacterium halodurans (strain ATCC BAA-125 / DSM 18197 / FERM 7344 / JCM 9153 / C-125) (Bacillus halodurans).